Here is a 1032-residue protein sequence, read N- to C-terminus: Contactin-1a (1032 aa).

Residues 1–31 (MIPEAFQPRAMKHTTTVLMLALSSRFWSVCA) form the signal peptide. Ig-like C2-type domains follow at residues 46 to 139 (PVFE…ARVQ), 144 to 231 (DMFS…KSVF), 249 to 335 (PADI…THLY), 340 to 417 (PDWL…AELR), 423 to 510 (PSFQ…GSLS), and 515 to 612 (TKIT…AELV). Intrachain disulfides connect cysteine 70–cysteine 122 and cysteine 166–cysteine 219. Asparagine 119, asparagine 216, and asparagine 266 each carry an N-linked (GlcNAc...) asparagine glycan. Cystine bridges form between cysteine 271–cysteine 319, cysteine 361–cysteine 401, and cysteine 446–cysteine 494. 4 N-linked (GlcNAc...) asparagine glycosylation sites follow: asparagine 455, asparagine 467, asparagine 483, and asparagine 504. Cysteine 536 and cysteine 596 form a disulfide bridge. Asparagine 604 is a glycosylation site (N-linked (GlcNAc...) asparagine). 4 consecutive Fibronectin type-III domains span residues 619-718 (PPGG…TREA), 723-820 (APSD…SAQD), 825-918 (APII…TKKS), and 920-1015 (PSRP…APAP). A disordered region spans residues 699–729 (NTLGTGPPSEPSPKTTTREARPIVAPSDIGG). A glycan (N-linked (GlcNAc...) asparagine) is linked at asparagine 879. The segment at 907 to 926 (ASQRNRIYTKKSPPSRPPKI) is disordered. Residue asparagine 950 is glycosylated (N-linked (GlcNAc...) asparagine). Residue glycine 1010 is the site of GPI-anchor amidated glycine attachment. A propeptide spans 1011–1032 (SAPAPALASALLLLPLLWTLML) (removed in mature form).

It belongs to the immunoglobulin superfamily. Contactin family. As to expression, expressed in brain.

The protein localises to the cell membrane. Its function is as follows. Mediates cell surface interactions during nervous system development. In Danio rerio (Zebrafish), this protein is Contactin-1a (cntn1a).